Here is a 725-residue protein sequence, read N- to C-terminus: Golgin candidate 4 (725 aa).

Residues 17–62 are disordered; sequence HDVHDDDEDDDEDLTIYGSTNGGTDRRNSNGFRYSRSPMANGFESP. A compositionally biased stretch (acidic residues) spans 21-30; the sequence is DDDEDDDEDL. Residues 66–132 are a coiled coil; that stretch reads EIERYKAEIN…LKESRLDLSR (67 aa). Disordered regions lie at residues 134 to 183, 191 to 210, and 311 to 349; these read SNNN…SHKK, LEER…EKER, and ASQK…KEDM. The span at 148–175 shows a compositional bias: polar residues; that stretch reads NRSQRSPTNWKNRNQMNNGIASKPNGTE. Coiled coils occupy residues 191-316, 344-407, and 437-563; these read LEER…QKST, PGKE…QTNE, and EIRK…LNRM. Over residues 324 to 349 the composition is skewed to basic and acidic residues; that stretch reads STEDLSRHLSSLDEEKAGTFPGKEDM. A GRIP domain is found at 562-613; sequence RMSMDSDFLVDRRIVIKLLVTYFQRNHSREVLDLMVRMLGFSEEEKQRIGLA. The segment covering 672–688 has biased composition (basic and acidic residues); the sequence is ERERREAEDAANKEQEK. The interval 672–725 is disordered; the sequence is ERERREAEDAANKEQEKATVSSTQRPKYEQSDSEFSTVPLTSSNSNHRLSRLLT. Low complexity predominate over residues 711–725; the sequence is LTSSNSNHRLSRLLT.

The protein resides in the golgi apparatus. Its function is as follows. Golgi matrix protein playing a role in tethering of vesicles to Golgi membranes and in maintaining the overall structure of the Golgi apparatus. The protein is Golgin candidate 4 (GC4) of Arabidopsis thaliana (Mouse-ear cress).